Here is a 344-residue protein sequence, read N- to C-terminus: Cell division protein ZipA (344 aa).

At 1–6 (MEDLQL) the chain is on the periplasmic side. Residues 7–27 (VLFVLGAIAIVAVLVHGFWSI) form a helical membrane-spanning segment. The Cytoplasmic segment spans residues 28–344 (RRQQPKSLKD…DYLHRIRANA (317 aa)). Disordered regions lie at residues 75–94 (VRKA…PYLK) and 108–139 (QFKQ…ASRQ).

The protein belongs to the ZipA family. Interacts with FtsZ via their C-terminal domains.

Its subcellular location is the cell inner membrane. Essential cell division protein that stabilizes the FtsZ protofilaments by cross-linking them and that serves as a cytoplasmic membrane anchor for the Z ring. Also required for the recruitment to the septal ring of downstream cell division proteins. The chain is Cell division protein ZipA from Shewanella oneidensis (strain ATCC 700550 / JCM 31522 / CIP 106686 / LMG 19005 / NCIMB 14063 / MR-1).